We begin with the raw amino-acid sequence, 154 residues long: Iron sulfur cluster assembly protein 1, mitochondrial (154 aa).

The protein belongs to the NifU family. As to quaternary structure, component of the core Fe-S cluster (ISC) assembly machinery. It depends on [2Fe-2S] cluster as a cofactor.

It is found in the mitochondrion matrix. It functions in the pathway cofactor biosynthesis; iron-sulfur cluster biosynthesis. In terms of biological role, scaffold protein for the de novo synthesis of iron-sulfur (Fe-S) clusters within mitochondria, which is required for maturation of both mitochondrial and cytoplasmic [2Fe-2S] and [4Fe-4S] proteins. First, a [2Fe-2S] cluster is transiently assembled on the scaffold protein ISU1. In a second step, the cluster is released from ISU1, transferred to a glutaredoxin, followed by the formation of mitochondrial [2Fe-2S] proteins, the synthesis of [4Fe-4S] clusters and their target-specific insertion into the recipient apoproteins. Cluster assembly on ISU1 depends on the function of the cysteine desulfurase complex NFS1-ISD11, which serves as the sulfur donor for cluster synthesis, the iron-binding protein frataxin as the putative iron donor, and the electron transfer chain comprised of ferredoxin reductase and ferredoxin, which receive their electrons from NADH. The protein is Iron sulfur cluster assembly protein 1, mitochondrial (ISU1) of Eremothecium gossypii (strain ATCC 10895 / CBS 109.51 / FGSC 9923 / NRRL Y-1056) (Yeast).